The primary structure comprises 333 residues: Biotin synthase (333 aa).

The region spanning 54-283 (FCSNTFDMCS…RAFIRLAGGR (230 aa)) is the Radical SAM core domain. 3 residues coordinate [4Fe-4S] cluster: cysteine 72, cysteine 76, and cysteine 79. Residues serine 116, cysteine 148, cysteine 208, and arginine 278 each contribute to the [2Fe-2S] cluster site.

The protein belongs to the radical SAM superfamily. Biotin synthase family. As to quaternary structure, homodimer. It depends on [4Fe-4S] cluster as a cofactor. The cofactor is [2Fe-2S] cluster.

It carries out the reaction (4R,5S)-dethiobiotin + (sulfur carrier)-SH + 2 reduced [2Fe-2S]-[ferredoxin] + 2 S-adenosyl-L-methionine = (sulfur carrier)-H + biotin + 2 5'-deoxyadenosine + 2 L-methionine + 2 oxidized [2Fe-2S]-[ferredoxin]. The protein operates within cofactor biosynthesis; biotin biosynthesis; biotin from 7,8-diaminononanoate: step 2/2. Its function is as follows. Catalyzes the conversion of dethiobiotin (DTB) to biotin by the insertion of a sulfur atom into dethiobiotin via a radical-based mechanism. This chain is Biotin synthase, found in Brachyspira hyodysenteriae (strain ATCC 49526 / WA1).